Reading from the N-terminus, the 320-residue chain is Aspartate carbamoyltransferase catalytic subunit (320 aa).

Carbamoyl phosphate-binding residues include arginine 68 and threonine 69. Position 96 (lysine 96) interacts with L-aspartate. Positions 118, 148, and 151 each coordinate carbamoyl phosphate. 2 residues coordinate L-aspartate: arginine 181 and arginine 236. Carbamoyl phosphate-binding residues include glycine 277 and proline 278.

The protein belongs to the aspartate/ornithine carbamoyltransferase superfamily. ATCase family. In terms of assembly, heterododecamer (2C3:3R2) of six catalytic PyrB chains organized as two trimers (C3), and six regulatory PyrI chains organized as three dimers (R2).

It carries out the reaction carbamoyl phosphate + L-aspartate = N-carbamoyl-L-aspartate + phosphate + H(+). It functions in the pathway pyrimidine metabolism; UMP biosynthesis via de novo pathway; (S)-dihydroorotate from bicarbonate: step 2/3. Its function is as follows. Catalyzes the condensation of carbamoyl phosphate and aspartate to form carbamoyl aspartate and inorganic phosphate, the committed step in the de novo pyrimidine nucleotide biosynthesis pathway. In Polaromonas naphthalenivorans (strain CJ2), this protein is Aspartate carbamoyltransferase catalytic subunit.